A 230-amino-acid polypeptide reads, in one-letter code: Large ribosomal subunit protein uL1 (230 aa).

Belongs to the universal ribosomal protein uL1 family. As to quaternary structure, part of the 50S ribosomal subunit.

Functionally, binds directly to 23S rRNA. The L1 stalk is quite mobile in the ribosome, and is involved in E site tRNA release. Protein L1 is also a translational repressor protein, it controls the translation of the L11 operon by binding to its mRNA. This is Large ribosomal subunit protein uL1 from Bacillus cereus (strain G9842).